Consider the following 228-residue polypeptide: Protein JAZ7 (228 aa).

The Tify domain occupies 101 to 136 (LSPNESTLTIFYMGEVHIFPGISPEKAELIIDLVSK). The Jas motif lies at 176-199 (MARRATLARFLEKRKHRLIKARPY). A Nuclear localization signal motif is present at residues 177 to 184 (ARRATLAR).

It belongs to the TIFY/JAZ family. Interacts with MYC2 (via N-terminus). JAZ7 competes with MED25 for binding to MYC2. Interacts with MTB1 (via N-terminus).

The protein localises to the nucleus. Functionally, repressor of jasmonate responses. This Solanum lycopersicum (Tomato) protein is Protein JAZ7.